Consider the following 679-residue polypeptide: Stress-70 protein, mitochondrial (679 aa).

The transit peptide at 1–46 directs the protein to the mitochondrion; the sequence is MISATRAAAARLVGTAASRTPAAARHQDGWNGLSHEAFRFVSRRDY. The interval 1–432 is interaction with NFS1; sequence MISATRAAAA…IQGGVLAGDV (432 aa). ADP-binding residues include Thr-63 and Asn-64. Positions 63-431 are nucleotide-binding domain (NBD); sequence TNSCVAVMEG…AIQGGVLAGD (369 aa). Lys-76 is modified (N6-acetyllysine). Thr-87 carries the phosphothreonine modification. Residues Lys-135 and Lys-138 each carry the N6-acetyllysine; alternate modification. N6-succinyllysine; alternate is present on residues Lys-135 and Lys-138. An N6-acetyllysine modification is found at Lys-143. At Lys-206 the chain carries N6-acetyllysine; alternate. Position 206 is an N6-succinyllysine; alternate (Lys-206). Lys-206 bears the N6-malonyllysine; alternate mark. Lys-234 and Lys-288 each carry N6-acetyllysine. The residue at position 300 (Lys-300) is an N6-acetyllysine; alternate. The residue at position 300 (Lys-300) is an N6-succinyllysine; alternate. Positions 313, 316, and 320 each coordinate ADP. At Lys-360 the chain carries N6-acetyllysine; alternate. N6-succinyllysine; alternate is present on Lys-360. Lys-368 carries the post-translational modification N6-succinyllysine. 2 residues coordinate ADP: Gly-388 and Arg-391. Position 394 is an N6-succinyllysine (Lys-394). At Ser-408 the chain carries Phosphoserine. The interval 432 to 441 is interdomain linker; the sequence is VTDVLLLDVT. The interaction with FXN and ISCU stretch occupies residues 432-679; it reads VTDVLLLDVT…QKEDQKEEKQ (248 aa). A substrate-binding domain (SBD) region spans residues 442–679; sequence PLSLGIETLG…QKEDQKEEKQ (238 aa). Arg-513 bears the Omega-N-methylarginine mark. Residues Lys-567 and Lys-600 each carry the N6-acetyllysine; alternate modification. Lys-567 and Lys-600 each carry N6-succinyllysine; alternate. Position 610 is an N6-succinyllysine (Lys-610). Lys-612 is modified (N6-acetyllysine). An N6-acetyllysine; alternate modification is found at Lys-646. An N6-succinyllysine; alternate modification is found at Lys-646. Positions 656–679 are disordered; that stretch reads ASEREGSGSSGTGEQKEDQKEEKQ. The segment covering 669-679 has biased composition (basic and acidic residues); that stretch reads EQKEDQKEEKQ.

The protein belongs to the heat shock protein 70 family. In terms of assembly, interacts strongly with the intermediate form of FXN and weakly with its mature form. Interacts with HSCB. Associates with the mitochondrial contact site and cristae organizing system (MICOS) complex, composed of at least MICOS10/MIC10, CHCHD3/MIC19, CHCHD6/MIC25, APOOL/MIC27, IMMT/MIC60, APOO/MIC23/MIC26 and QIL1/MIC13. This complex was also known under the names MINOS or MitOS complex. The MICOS complex associates with mitochondrial outer membrane proteins SAMM50, MTX1, MTX2 and DNAJC11, mitochondrial inner membrane protein TMEM11 and with HSPA9. Interacts with DNLZ, the interaction is required to prevent self-aggregation. Interacts with TESPA1. Interacts with PDPN. Interacts with NFU1, NFS1 and ISCU. Interacts with TP53; the interaction promotes TP53 degradation. Interacts (via SBD domain) with UBXN2A; the interaction with UBXN2A inhibits HSPA9/MOT-2 interaction with and degradation of TP53, thereby promotes TP53 translocation to the nucleus. Interacts with ITPR1 AND VDAC1; this interaction couples ITPR1 to VDAC1. Component of the TIM23 mitochondrial inner membrane pre-sequence translocase complex.

The protein resides in the mitochondrion. The protein localises to the nucleus. It localises to the nucleolus. Its subcellular location is the cytoplasm. It is found in the mitochondrion matrix. It carries out the reaction ATP + H2O = ADP + phosphate + H(+). With respect to regulation, the chaperone activity is regulated by ATP-induced allosteric coupling of the nucleotide-binding (NBD) and substrate-binding (SBD) domains. ATP binding in the NBD leads to a conformational change in the NBD, which is transferred through the interdomain linker (IDL) to the substrate-binding domain (SBD). This elicits a reduced substrate affinity and a faster substrate exchange rate. Upon hydrolysis of ATP to ADP, the protein undergoes a conformational change that increases its affinity for substrate proteins. It cycles through repeated phases of ATP hydrolysis and nucleotide exchange, facilitating repeated cycles of substrate binding and release. Functions in collaboration with co-chaperones. Functions with the co-chaperone, DNLZ, to maintain solubility and regulate ATP hydrolysis. Nucleotide exchange factors, GRPEL1 and GRPEL2, accelerate nucleotide exchange. In terms of biological role, mitochondrial chaperone that plays a key role in mitochondrial protein import, folding, and assembly. Plays an essential role in the protein quality control system, the correct folding of proteins, the re-folding of misfolded proteins, and the targeting of proteins for subsequent degradation. These processes are achieved through cycles of ATP binding, ATP hydrolysis, and ADP release, mediated by co-chaperones. In mitochondria, it associates with the TIM (translocase of the inner membrane) protein complex to assist in the import and folding of mitochondrial proteins. Plays an important role in mitochondrial iron-sulfur cluster (ISC) biogenesis, interacts with and stabilizes ISC cluster assembly proteins FXN, NFU1, NFS1 and ISCU. Regulates erythropoiesis via stabilization of ISC assembly. Regulates mitochondrial calcium-dependent apoptosis by coupling two calcium channels, ITPR1 and VDAC1, at the mitochondria-associated endoplasmic reticulum (ER) membrane to facilitate calcium transport from the ER lumen to the mitochondria intermembrane space, providing calcium for the downstream calcium channel MCU, which releases it into the mitochondrial matrix. Although primarily located in the mitochondria, it is also found in other cellular compartments. In the cytosol, it associates with proteins involved in signaling, apoptosis, or senescence. It may play a role in cell cycle regulation via its interaction with and promotion of degradation of TP53. May play a role in the control of cell proliferation and cellular aging. Protects against reactive oxygen species (ROS). Extracellular HSPA9 plays a cytoprotective role by preventing cell lysis following immune attack by the membrane attack complex by disrupting formation of the complex. This is Stress-70 protein, mitochondrial from Cricetulus griseus (Chinese hamster).